The primary structure comprises 298 residues: UDP-N-acetylenolpyruvoylglucosamine reductase (298 aa).

An FAD-binding PCMH-type domain is found at 27–191; sequence TGGEADVFVM…LDATFSLALE (165 aa). Arg-170 is an active-site residue. Ser-220 serves as the catalytic Proton donor. The active site involves Glu-290.

This sequence belongs to the MurB family. It depends on FAD as a cofactor.

Its subcellular location is the cytoplasm. The catalysed reaction is UDP-N-acetyl-alpha-D-muramate + NADP(+) = UDP-N-acetyl-3-O-(1-carboxyvinyl)-alpha-D-glucosamine + NADPH + H(+). Its pathway is cell wall biogenesis; peptidoglycan biosynthesis. In terms of biological role, cell wall formation. This Listeria monocytogenes serotype 4a (strain HCC23) protein is UDP-N-acetylenolpyruvoylglucosamine reductase.